The following is a 200-amino-acid chain: LexA repressor (200 aa).

Positions 29-48 form a DNA-binding region, H-T-H motif; sequence IRDIARAFRITPRGAIVHLN. Catalysis depends on for autocatalytic cleavage activity residues Ser-120 and Lys-158.

Belongs to the peptidase S24 family. Homodimer.

The catalysed reaction is Hydrolysis of Ala-|-Gly bond in repressor LexA.. In terms of biological role, represses a number of genes involved in the response to DNA damage (SOS response), including recA and lexA. In the presence of single-stranded DNA, RecA interacts with LexA causing an autocatalytic cleavage which disrupts the DNA-binding part of LexA, leading to derepression of the SOS regulon and eventually DNA repair. The polypeptide is LexA repressor (Pseudothermotoga lettingae (strain ATCC BAA-301 / DSM 14385 / NBRC 107922 / TMO) (Thermotoga lettingae)).